Here is a 363-residue protein sequence, read N- to C-terminus: Putative serine/threonine-protein kinase gskl-1 (363 aa).

A Protein kinase domain is found at 20-304 (FGAHKLCGSG…AIDVLKMPLF (285 aa)). ATP contacts are provided by residues 26 to 34 (CGSGRFSNV) and K50. The active-site Proton acceptor is D146. The interval 311-363 (PPKKRSNGVEMPNLASYTEMHHKREPETEVVADIQTTEKAEKESDSTNEELED) is disordered. Over residues 346–355 (TTEKAEKESD) the composition is skewed to basic and acidic residues.

The protein belongs to the protein kinase superfamily. Ser/Thr protein kinase family. In terms of tissue distribution, expressed during multiple stages of spermatogenesis, in males and hermaphrodites (at protein level).

The protein localises to the cytoplasm. The protein resides in the cell projection. It localises to the pseudopodium. It carries out the reaction L-seryl-[protein] + ATP = O-phospho-L-seryl-[protein] + ADP + H(+). It catalyses the reaction L-threonyl-[protein] + ATP = O-phospho-L-threonyl-[protein] + ADP + H(+). May be an autophosphorylating tyrosine kinase, a bifunctional (serine/tyrosine-specific) protein kinase, or a serine kinase that is a substrate for an associated tyrosine kinase. Acting in concert with putative serine/threonine-protein kinase gskl-2, required for sister chromatid segregation and spermatid budding during male meiosis. Plays a role in regulating female meiosis II, together with gskl-2. Involved in sperm pseudopod formation and function, together with gskl-2. The sequence is that of Putative serine/threonine-protein kinase gskl-1 from Caenorhabditis elegans.